The primary structure comprises 195 residues: Transcriptional regulator LdrP (195 aa).

The region spanning 110 to 182 (GELRARIARY…YRRVYLLDLA (73 aa)) is the HTH crp-type domain. The H-T-H motif DNA-binding region spans 142–161 (HEEIADATASIRESVSKVLA).

In terms of assembly, homodimer.

Functionally, activates transcription. Positively regulates PcrtB promoter upstream of the crtB operon in a cAMP-independent manner. Regulated genes include genes encoding DNA photolyase, phytoene synthase and cytochrome P450 monooxygenase, which are involved in carotenoid biosynthesis. Positively regulates the light-inducible gene cluster in the megaplasmid in a cAMP-independent manner. This chain is Transcriptional regulator LdrP, found in Thermus thermophilus (strain ATCC 27634 / DSM 579 / HB8).